The primary structure comprises 631 residues: Acurin A biosynthesis cluster transcription regulator (631 aa).

Polar residues predominate over residues 1–11 (MSPNMSLTASH). Residues 1-28 (MSPNMSLTASHPQQPQPTPQSKAQLTRQ) are disordered. A DNA-binding region (zn(2)-C6 fungal-type) is located at residues 30 to 62 (CNRCHASKLKCLRPPGVTTSKSCIRCIKADTEC). Disordered regions lie at residues 64 to 141 (YDPP…PDNR), 489 to 522 (CSSS…HPAT), and 536 to 573 (HSSS…YPTP). Over residues 88–99 (IEAREPEVTDPR) the composition is skewed to basic and acidic residues. The segment covering 119–128 (NGSLAPSSAA) has biased composition (polar residues).

Its subcellular location is the nucleus. In terms of biological role, transcription factor that positively regulates the expression of the cluster that mediates the biosynthesis of acurin A, a highly reduced polyketide coupled to a serine via a peptide bond. The sequence is that of Acurin A biosynthesis cluster transcription regulator from Aspergillus aculeatus (strain ATCC 16872 / CBS 172.66 / WB 5094).